We begin with the raw amino-acid sequence, 378 residues long: Protein RecA (378 aa).

Residue 79–86 (GPESSGKT) participates in ATP binding.

Belongs to the RecA family.

The protein localises to the cytoplasm. Can catalyze the hydrolysis of ATP in the presence of single-stranded DNA, the ATP-dependent uptake of single-stranded DNA by duplex DNA, and the ATP-dependent hybridization of homologous single-stranded DNAs. It interacts with LexA causing its activation and leading to its autocatalytic cleavage. The protein is Protein RecA of Streptococcus pyogenes serotype M2 (strain MGAS10270).